The sequence spans 66 residues: Toxin Boma6e (66 aa).

Positions 2–64 constitute an LCN-type CS-alpha/beta domain; it reads RDAYIAQNYN…VPLKVQGKCH (63 aa). 3 disulfide bridges follow: Cys12-Cys63, Cys22-Cys46, and Cys26-Cys48.

This sequence belongs to the long (3 C-C) scorpion toxin superfamily. Only three disulfide bridges can be formed, because only seven cysteines are present. In terms of tissue distribution, expressed by the venom gland.

Its subcellular location is the secreted. Its function is as follows. Binds voltage-independently at site-3 of sodium channels (Nav) and inhibits the inactivation of the activated channels, thereby blocking neuronal transmission. This chain is Toxin Boma6e, found in Buthus occitanus mardochei (Moroccan scorpion).